The following is a 155-amino-acid chain: 3-dehydroquinate dehydratase (155 aa).

Residue Tyr-31 is the Proton acceptor of the active site. Positions 83, 89, and 96 each coordinate substrate. His-109 serves as the catalytic Proton donor. Residues 110–111 (LS) and Arg-120 each bind substrate.

This sequence belongs to the type-II 3-dehydroquinase family. As to quaternary structure, homododecamer.

The catalysed reaction is 3-dehydroquinate = 3-dehydroshikimate + H2O. It functions in the pathway metabolic intermediate biosynthesis; chorismate biosynthesis; chorismate from D-erythrose 4-phosphate and phosphoenolpyruvate: step 3/7. Its function is as follows. Catalyzes a trans-dehydration via an enolate intermediate. This chain is 3-dehydroquinate dehydratase, found in Laribacter hongkongensis (strain HLHK9).